Consider the following 305-residue polypeptide: Porphobilinogen deaminase (305 aa).

Cys243 is subject to S-(dipyrrolylmethanemethyl)cysteine.

This sequence belongs to the HMBS family. Monomer. Dipyrromethane is required as a cofactor.

It catalyses the reaction 4 porphobilinogen + H2O = hydroxymethylbilane + 4 NH4(+). Its pathway is porphyrin-containing compound metabolism; protoporphyrin-IX biosynthesis; coproporphyrinogen-III from 5-aminolevulinate: step 2/4. Functionally, tetrapolymerization of the monopyrrole PBG into the hydroxymethylbilane pre-uroporphyrinogen in several discrete steps. The polypeptide is Porphobilinogen deaminase (Limosilactobacillus reuteri (strain DSM 20016) (Lactobacillus reuteri)).